The following is a 714-amino-acid chain: DNA ligase (714 aa).

NAD(+)-binding positions include 48 to 52, 97 to 98, and E129; these read DADYD and SL. Catalysis depends on K131, which acts as the N6-AMP-lysine intermediate. The NAD(+) site is built by R152, E189, K307, and K331. Residues C436, C439, C454, and C460 each coordinate Zn(2+). The region spanning 637–714 is the BRCT domain; sequence KQDTAVAGKT…TEDEWLALIG (78 aa).

Belongs to the NAD-dependent DNA ligase family. LigA subfamily. It depends on Mg(2+) as a cofactor. Mn(2+) is required as a cofactor.

The enzyme catalyses NAD(+) + (deoxyribonucleotide)n-3'-hydroxyl + 5'-phospho-(deoxyribonucleotide)m = (deoxyribonucleotide)n+m + AMP + beta-nicotinamide D-nucleotide.. Functionally, DNA ligase that catalyzes the formation of phosphodiester linkages between 5'-phosphoryl and 3'-hydroxyl groups in double-stranded DNA using NAD as a coenzyme and as the energy source for the reaction. It is essential for DNA replication and repair of damaged DNA. The sequence is that of DNA ligase from Rhodopseudomonas palustris (strain BisB5).